The following is a 541-amino-acid chain: Malate synthase (541 aa).

Residue arginine 169 is the Proton acceptor of the active site. The active-site Proton donor is the aspartate 454.

The protein belongs to the malate synthase family.

The protein localises to the cytoplasm. It catalyses the reaction glyoxylate + acetyl-CoA + H2O = (S)-malate + CoA + H(+). It participates in carbohydrate metabolism; glyoxylate cycle; (S)-malate from isocitrate: step 2/2. The sequence is that of Malate synthase (aceB) from Streptomyces clavuligerus.